The sequence spans 403 residues: S-arrestin (403 aa).

At T231 the chain carries Phosphothreonine. Positions 381–403 (RQNLKDTGENTEGKKDEDAGQDE) are disordered.

Belongs to the arrestin family. As to quaternary structure, monomer. Homodimer. Homotetramer. Interacts with RHO (via the phosphorylated C-terminus). Retina and pineal gland.

It is found in the cell projection. It localises to the cilium. Its subcellular location is the photoreceptor outer segment. The protein resides in the membrane. Its function is as follows. Binds to photoactivated, phosphorylated RHO and terminates RHO signaling via G-proteins by competing with G-proteins for the same binding site on RHO. May play a role in preventing light-dependent degeneration of retinal photoreceptor cells. The protein is S-arrestin (Sag) of Rattus norvegicus (Rat).